Consider the following 197-residue polypeptide: Transcription factor FapR (197 aa).

The protein belongs to the FapR family.

In terms of biological role, transcriptional factor involved in regulation of membrane lipid biosynthesis by repressing genes involved in fatty acid and phospholipid metabolism. The protein is Transcription factor FapR of Bacillus cytotoxicus (strain DSM 22905 / CIP 110041 / 391-98 / NVH 391-98).